Here is a 410-residue protein sequence, read N- to C-terminus: Iron-sulfur cluster assembly SufBD family protein MTH_1150 (410 aa).

Belongs to the iron-sulfur cluster assembly SufBD family.

The chain is Iron-sulfur cluster assembly SufBD family protein MTH_1150 from Methanothermobacter thermautotrophicus (strain ATCC 29096 / DSM 1053 / JCM 10044 / NBRC 100330 / Delta H) (Methanobacterium thermoautotrophicum).